The primary structure comprises 950 residues: Serine/threonine-protein phosphatase 4 regulatory subunit 1 (950 aa).

HEAT repeat units follow at residues 1-25, 26-63, 65-81, 82-119, 127-164, 168-206, 208-246, 248-285, and 287-324; these read MADL…DYSS, ESDV…IFNR, MVAR…CDDE, RDCI…FCQE, AFSK…QELI, DVET…MVGK, ITER…VVGQ, ATEE…ATCQ, and IRRT…TFAN. 3 disordered regions span residues 326-374, 413-438, and 473-499; these read SSSG…SVSN, ESHQ…RPEV, and EQNS…SPNI. A compositionally biased stretch (basic and acidic residues) spans 332–365; that stretch reads FKEESKSSEEMSVENKNRTRDQEAPEDVQVRPED. HEAT repeat units follow at residues 505-542, 568-606, 698-734, 799-837, and 861-898; these read KELE…LDAH, INQE…FSPD, LTAA…LLHI, WISY…RCPK, and QFAV…EKDY. Position 935 is a phosphoserine (Ser-935).

In terms of assembly, serine/threonine-protein phosphatase 4 (PP4) occurs in different assemblies of the catalytic and one or more regulatory subunits. Component of the PP4 complex PPP4C-PPP4R1. Interacts with HDAC3. As to quaternary structure, (Microbial infection) Interacts with merkel polyomavirus small tumor antigen; this interaction bridges small tumor antigen with NEMO to inhibit NF-kappa-B. As to expression, widely expressed with high expression in cultured mesangial cells. Isoform 1 and isoform 2 are expressed in renal tissues.

Its function is as follows. Regulatory subunit of serine/threonine-protein phosphatase 4. May play a role in regulation of cell division in renal glomeruli. The PPP4C-PPP4R1 PP4 complex may play a role in dephosphorylation and regulation of HDAC3. Plays a role in the inhibition of TNF-induced NF-kappa-B activation by regulating the dephosphorylation of TRAF2. In terms of biological role, (Microbial infection) Participates in merkel polyomavirus-mediated inhibition of NF-kappa-B by bridging viral small tumor antigen with NEMO. The chain is Serine/threonine-protein phosphatase 4 regulatory subunit 1 (PPP4R1) from Homo sapiens (Human).